A 177-amino-acid polypeptide reads, in one-letter code: DNA repair protein RAD33 (177 aa).

Position 2 is an N-acetylserine (Ser-2). Lys-19 participates in a covalent cross-link: Glycyl lysine isopeptide (Lys-Gly) (interchain with G-Cter in ubiquitin).

The protein localises to the nucleus. Involved in nucleotide excision repair (NER) of damaged DNA. Required for the repair of RNA polymerase I-transcribed rDNA and RNA polymerase II-transcribed DNA regions. May have a role in stabilizing the DNA repair proteins RAD4 and RAD34. This chain is DNA repair protein RAD33 (RAD33), found in Saccharomyces cerevisiae (strain ATCC 204508 / S288c) (Baker's yeast).